We begin with the raw amino-acid sequence, 354 residues long: tRNA dimethylallyltransferase (354 aa).

28–35 (GPTATGKS) lines the ATP pocket. 30–35 (TATGKS) is a binding site for substrate. Residues 53–56 (DSRQ) form an interaction with substrate tRNA region.

This sequence belongs to the IPP transferase family. As to quaternary structure, monomer. Mg(2+) serves as cofactor.

The enzyme catalyses adenosine(37) in tRNA + dimethylallyl diphosphate = N(6)-dimethylallyladenosine(37) in tRNA + diphosphate. Catalyzes the transfer of a dimethylallyl group onto the adenine at position 37 in tRNAs that read codons beginning with uridine, leading to the formation of N6-(dimethylallyl)adenosine (i(6)A). The sequence is that of tRNA dimethylallyltransferase from Synechococcus sp. (strain JA-2-3B'a(2-13)) (Cyanobacteria bacterium Yellowstone B-Prime).